The following is a 129-amino-acid chain: Small ribosomal subunit protein uS8 (129 aa).

This sequence belongs to the universal ribosomal protein uS8 family. Part of the 30S ribosomal subunit. Contacts proteins S5 and S12.

Functionally, one of the primary rRNA binding proteins, it binds directly to 16S rRNA central domain where it helps coordinate assembly of the platform of the 30S subunit. This Mycoplasma mycoides subsp. mycoides SC (strain CCUG 32753 / NCTC 10114 / PG1) protein is Small ribosomal subunit protein uS8.